The following is a 555-amino-acid chain: Steroid-22-oyl-CoA synthetase (555 aa).

The protein belongs to the ATP-dependent AMP-binding enzyme family.

It carries out the reaction 3-oxochol-4-en-22-oate + ATP + CoA = 3-oxochol-4-en-22-oyl-CoA + AMP + diphosphate. The catalysed reaction is 3-hydroxy-9-oxo-9,10-seco-chola-1,3,5-trien-22-oate + ATP + CoA = 3-hydroxy-9-oxo-9,10-seco-chola-1,3,5-trien-22-oyl-CoA + AMP + diphosphate. The protein operates within steroid metabolism. In terms of biological role, involved in cholate catabolism. Catalyzes the ATP-dependent formation of CoA thioesters of steroids with isopropanoyl side chains, likely occurring as degradation intermediates. Can use 4-BNC, HSBNC and HIDP as substrate. This is Steroid-22-oyl-CoA synthetase from Rhodococcus jostii (strain RHA1).